The primary structure comprises 198 residues: Putative 3-methyladenine DNA glycosylase (198 aa).

This sequence belongs to the DNA glycosylase MPG family.

The polypeptide is Putative 3-methyladenine DNA glycosylase (Rhizobium johnstonii (strain DSM 114642 / LMG 32736 / 3841) (Rhizobium leguminosarum bv. viciae)).